The following is an 86-amino-acid chain: Beta-toxin CsEI (86 aa).

Residues 1-19 (MNSLLMITACLVLIGTVWA) form the signal peptide. The 65-residue stretch at 20-84 (KDGYLVEKTG…TWPLPNKTCG (65 aa)) folds into the LCN-type CS-alpha/beta domain. Intrachain disulfides connect Cys30/Cys83, Cys34/Cys59, Cys43/Cys64, and Cys47/Cys66. A Cysteine amide modification is found at Cys83.

This sequence belongs to the long (4 C-C) scorpion toxin superfamily. Sodium channel inhibitor family. Beta subfamily. As to expression, expressed by the venom gland.

The protein localises to the secreted. In terms of biological role, beta toxins bind voltage-independently at site-4 of sodium channels (Nav) and shift the voltage of activation toward more negative potentials thereby affecting sodium channel activation and promoting spontaneous and repetitive firing. Affects channels from chicken and frog. In Centruroides sculpturatus (Arizona bark scorpion), this protein is Beta-toxin CsEI.